The primary structure comprises 106 residues: Iron-sulfur cluster assembly protein CyaY (106 aa).

This sequence belongs to the frataxin family.

In terms of biological role, involved in iron-sulfur (Fe-S) cluster assembly. May act as a regulator of Fe-S biogenesis. This Shigella flexneri serotype 5b (strain 8401) protein is Iron-sulfur cluster assembly protein CyaY.